A 320-amino-acid chain; its full sequence is Pyrroline-5-carboxylate reductase 2 (320 aa).

S2 is modified (N-acetylserine). NADP(+) contacts are provided by residues I6–L11 and S34. The NADPH site is built by A8, Q10, L11, S34, E36, N56, V70, K71, and A97. Residues N56, A69–P72, and C95–A97 contribute to the NADP(+) site. An L-proline-binding site is contributed by E164. N230 lines the NADPH pocket. 2 residues coordinate L-proline: A237 and T238. Low complexity predominate over residues P295 to P305. Positions P295–D320 are disordered. The residue at position 304 (S304) is a Phosphoserine.

It belongs to the pyrroline-5-carboxylate reductase family. As to quaternary structure, homodecamer; composed of 5 homodimers. Interacts with LTO1. Detected in erythrocytes (at protein level). Expressed in fetal brain.

It localises to the cytoplasm. Its subcellular location is the mitochondrion. The enzyme catalyses L-proline + NADP(+) = (S)-1-pyrroline-5-carboxylate + NADPH + 2 H(+). It catalyses the reaction L-proline + NAD(+) = (S)-1-pyrroline-5-carboxylate + NADH + 2 H(+). It participates in amino-acid biosynthesis; L-proline biosynthesis; L-proline from L-glutamate 5-semialdehyde: step 1/1. Subject to competitive inhibition by NADP. Was reported not to be inhibited by proline. However other study demonstrated an inhibition by proline. Its function is as follows. Oxidoreductase that catalyzes the last step in proline biosynthesis, which corresponds to the reduction of pyrroline-5-carboxylate to L-proline using NAD(P)H. At physiologic concentrations, has higher specific activity in the presence of NADH. Involved in cellular response to oxidative stress. In some cell types, such as erythrocytes, its primary function may be the generation of NADP(+). In Homo sapiens (Human), this protein is Pyrroline-5-carboxylate reductase 2.